The following is a 300-amino-acid chain: NAD kinase (300 aa).

Asp-75 acts as the Proton acceptor in catalysis. NAD(+)-binding positions include 75–76 (DG), 149–150 (ND), Arg-177, Asp-179, 190–195 (TAYALS), Ala-214, and Gln-248.

It belongs to the NAD kinase family. A divalent metal cation is required as a cofactor.

The protein localises to the cytoplasm. The catalysed reaction is NAD(+) + ATP = ADP + NADP(+) + H(+). Its function is as follows. Involved in the regulation of the intracellular balance of NAD and NADP, and is a key enzyme in the biosynthesis of NADP. Catalyzes specifically the phosphorylation on 2'-hydroxyl of the adenosine moiety of NAD to yield NADP. The polypeptide is NAD kinase (Burkholderia lata (strain ATCC 17760 / DSM 23089 / LMG 22485 / NCIMB 9086 / R18194 / 383)).